The sequence spans 334 residues: Trans-1,2-dihydrobenzene-1,2-diol dehydrogenase (334 aa).

Belongs to the Gfo/Idh/MocA family. In terms of assembly, homodimer. In terms of tissue distribution, small intestine.

The catalysed reaction is (1R,2R)-1,2-dihydrobenzene-1,2-diol + NADP(+) = catechol + NADPH + H(+). The enzyme catalyses D-xylose + NADP(+) = D-xylono-1,5-lactone + NADPH + H(+). The protein is Trans-1,2-dihydrobenzene-1,2-diol dehydrogenase (DHDH) of Homo sapiens (Human).